The chain runs to 907 residues: Leucine-rich repeat-containing G-protein coupled receptor 5 (907 aa).

The N-terminal stretch at 1–21 (MDTSSVGVLLSLPVLLQLAAG) is a signal peptide. The Extracellular portion of the chain corresponds to 22 to 553 (GGSPRPGTLL…SPGPFKLCEY (532 aa)). The 32-residue stretch at 33 to 64 (GCPAHCQCEPDGRMLLRVDCSDLGLSELPSNL) folds into the LRRNT domain. 2 disulfides stabilise this stretch: Cys-34–Cys-40 and Cys-38–Cys-52. LRR repeat units lie at residues 44–64 (GRML…PSNL), 65–88 (SVFT…PLHS), 89–112 (LRFL…AFAG), 114–136 (YSLK…ALQN), 137–160 (LRSL…CFSG), 162–184 (HSLR…AFRS), 185–208 (LSAL…AFGN), 209–232 (LSSL…CFDG), 233–256 (LHSL…VRTL), 257–279 (SNLK…AFVG), 281–303 (PSLI…AFQH), 304–327 (LPEL…LTGT), 328–350 (ASLE…VCDQ), 351–375 (LPNL…VCQK), 377–396 (QKID…TFQQ), 397–420 (LFSL…AFST), and 421–444 (LPSL…GLHG). N-linked (GlcNAc...) asparagine glycosylation is found at Asn-63 and Asn-77. N-linked (GlcNAc...) asparagine glycosylation occurs at Asn-208. A disulfide bond links Cys-348 and Cys-373. An intrachain disulfide couples Cys-479 to Cys-541. The N-linked (GlcNAc...) asparagine glycan is linked to Asn-500. The chain crosses the membrane as a helical span at residues 554–574 (LFGSWLIRIGVWTIAVLALTC). The LRR 18 repeat unit spans residues 564 to 585 (VWTIAVLALTCNALVTSTVFRA). Over 575 to 593 (NALVTSTVFRAAVYISSIK) the chain is Cytoplasmic. Residues 594–614 (LLIGLIAAVNMLMGVSSAVLA) traverse the membrane as a helical segment. The Extracellular segment spans residues 615–638 (GVDAFTFGSFAQHGAWWEQAVGCQ). Cys-637 and Cys-712 are joined by a disulfide. Residues 639-659 (VVGFLSIFASESSVFLLTLAA) traverse the membrane as a helical segment. The Cytoplasmic portion of the chain corresponds to 660 to 682 (LERGWSVKCSAKFETQTPFPSLR). The chain crosses the membrane as a helical span at residues 683-703 (ATLALCALLAGTVAAVPLLGG). Topologically, residues 704-723 (SEYSASPLCLPLPFGEPRAT) are extracellular. The chain crosses the membrane as a helical span at residues 724-744 (GYMVALVLLNSLCFLVMTVAY). Topologically, residues 745–767 (TRLYCHLEKGDLESMWDCSMVKH) are cytoplasmic. Residues 768 to 788 (VALLLFTNCILHCPVAFLSFS) traverse the membrane as a helical segment. Topologically, residues 789 to 802 (SLLNLTFISPEVIK) are extracellular. An N-linked (GlcNAc...) asparagine glycan is attached at Asn-792. The chain crosses the membrane as a helical span at residues 803 to 823 (FILLVIVPLPACLNPLLYILF). Over 824-907 (NPHFKEDLGS…LSSVAFVPCL (84 aa)) the chain is Cytoplasmic.

Belongs to the G-protein coupled receptor 1 family. As to quaternary structure, identified in a complex composed of RNF43, LGR5 and RSPO1. Also interacts with other R-spondin ligands, including RSPO2, RSPO3 and RSPO4.

Its subcellular location is the cell membrane. It is found in the golgi apparatus. The protein localises to the trans-Golgi network membrane. Receptor for R-spondins that potentiates the canonical Wnt signaling pathway and acts as a stem cell marker of the intestinal epithelium and the hair follicle. Upon binding to R-spondins (RSPO1, RSPO2, RSPO3 or RSPO4), associates with phosphorylated LRP6 and frizzled receptors that are activated by extracellular Wnt receptors, triggering the canonical Wnt signaling pathway to increase expression of target genes. In contrast to classical G-protein coupled receptors, does not activate heterotrimeric G-proteins to transduce the signal. Involved in the development and/or maintenance of the adult intestinal stem cells during postembryonic development. This chain is Leucine-rich repeat-containing G-protein coupled receptor 5 (LGR5), found in Bos taurus (Bovine).